A 469-amino-acid polypeptide reads, in one-letter code: Ribulose bisphosphate carboxylase large chain (469 aa).

A propeptide spanning residues 1–2 (MS) is cleaved from the precursor. An N-acetylproline modification is found at P3. An N6,N6,N6-trimethyllysine modification is found at K14. Substrate contacts are provided by N123 and T173. Residue K175 is the Proton acceptor of the active site. Position 177 (K177) interacts with substrate. Mg(2+) contacts are provided by K201, D203, and E204. K201 is subject to N6-carboxylysine. Residue H294 is the Proton acceptor of the active site. Residues R295, H327, and S379 each contribute to the substrate site.

This sequence belongs to the RuBisCO large chain family. Type I subfamily. In terms of assembly, heterohexadecamer of 8 large chains and 8 small chains; disulfide-linked. The disulfide link is formed within the large subunit homodimers. It depends on Mg(2+) as a cofactor. Post-translationally, the disulfide bond which can form in the large chain dimeric partners within the hexadecamer appears to be associated with oxidative stress and protein turnover.

It localises to the plastid. Its subcellular location is the chloroplast. The enzyme catalyses 2 (2R)-3-phosphoglycerate + 2 H(+) = D-ribulose 1,5-bisphosphate + CO2 + H2O. It catalyses the reaction D-ribulose 1,5-bisphosphate + O2 = 2-phosphoglycolate + (2R)-3-phosphoglycerate + 2 H(+). In terms of biological role, ruBisCO catalyzes two reactions: the carboxylation of D-ribulose 1,5-bisphosphate, the primary event in carbon dioxide fixation, as well as the oxidative fragmentation of the pentose substrate in the photorespiration process. Both reactions occur simultaneously and in competition at the same active site. In Dianthus caryophyllus (Carnation), this protein is Ribulose bisphosphate carboxylase large chain.